The primary structure comprises 1101 residues: Rho GTPase-activating protein 30 (1101 aa).

The Rho-GAP domain occupies C20–F215. Disordered regions lie at residues E224–D243, H300–G400, and A451–G529. Positions R308–N318 are enriched in basic and acidic residues. Positions L360–A376 are enriched in acidic residues. The span at A459–P472 shows a compositional bias: pro residues. Residues D508 to E520 are compositionally biased toward low complexity. The residue at position 576 (S576) is a Phosphoserine. 2 disordered regions span residues G621–P906 and C965–N991. Basic and acidic residues-rich tracts occupy residues G658–E694, T701–E735, E759–E770, and A779–S822. Low complexity predominate over residues G976 to N991. A Phosphoserine modification is found at S996. A disordered region spans residues L1050 to L1101. Residues P1053–P1069 are compositionally biased toward low complexity. The segment covering L1080 to N1094 has biased composition (polar residues).

Interacts with RHOU in a GTP-independent manner.

It localises to the cytoplasmic vesicle. Its function is as follows. GTPase-activating protein (GAP) for RAC1 and RHOA, but not for CDC42. The chain is Rho GTPase-activating protein 30 (ARHGAP30) from Homo sapiens (Human).